A 98-amino-acid chain; its full sequence is Transcription elongation factor A protein-like 7 (98 aa).

Residues 1 to 24 (MQRSCNEKEGKPKCSEPKREEEHP) show a composition bias toward basic and acidic residues. Residues 1–31 (MQRSCNEKEGKPKCSEPKREEEHPYGAFEGQ) are disordered. Residues 59–89 (GEEMTGEEEEMERCLEEIRSLRKKFRALHSN) are a coiled coil.

This sequence belongs to the TFS-II family. TFA subfamily.

The protein resides in the nucleus. In terms of biological role, plays a role in the negative regulation of NF-kappa-B signaling at the basal level by modulating transcriptional activity of NF-kappa-B on its target gene promoters. Associates with cyclin D1 promoter containing Myc E-box sequence and transcriptionally represses cyclin D1 expression. Regulates telomerase reverse transcriptase expression and telomerase activity in both ALT (alternative lengthening of telomeres)and telomerase-positive cell lines. The protein is Transcription elongation factor A protein-like 7 (Tceal7) of Rattus norvegicus (Rat).